The primary structure comprises 74 residues: Cecropin-P2 (74 aa).

The signal sequence occupies residues 1–13 (MIFIYLLVQTAES). Residues 45–74 (RRRFVVQQDTISPRLEVDERFLPNSVQEQI) constitute a propeptide, removed in mature form.

Belongs to the cecropin family. Expressed in the body wall, intestine, uterus and ovary.

It localises to the secreted. In terms of biological role, has antibacterial activity against several Gram-positive and Gram-negative bacteria. Is weakly active against yeasts. Acts by a nonpore mechanism. The protein is Cecropin-P2 (ASCEC-2) of Ascaris suum (Pig roundworm).